Here is a 271-residue protein sequence, read N- to C-terminus: Phosphonoacetaldehyde hydrolase (271 aa).

Residue D12 is the Nucleophile of the active site. 2 residues coordinate Mg(2+): D12 and A14. K54 (schiff-base intermediate with substrate) is an active-site residue. Residue D188 coordinates Mg(2+).

It belongs to the HAD-like hydrolase superfamily. PhnX family. In terms of assembly, homodimer. The cofactor is Mg(2+).

It catalyses the reaction phosphonoacetaldehyde + H2O = acetaldehyde + phosphate + H(+). Involved in phosphonate degradation. This is Phosphonoacetaldehyde hydrolase from Aliivibrio salmonicida (strain LFI1238) (Vibrio salmonicida (strain LFI1238)).